Here is a 156-residue protein sequence, read N- to C-terminus: Small ribosomal subunit protein uS7 (156 aa).

It belongs to the universal ribosomal protein uS7 family. Part of the 30S ribosomal subunit. Contacts proteins S9 and S11.

Its function is as follows. One of the primary rRNA binding proteins, it binds directly to 16S rRNA where it nucleates assembly of the head domain of the 30S subunit. Is located at the subunit interface close to the decoding center, probably blocks exit of the E-site tRNA. The sequence is that of Small ribosomal subunit protein uS7 from Desulfitobacterium hafniense (strain Y51).